The sequence spans 298 residues: 4-diphosphocytidyl-2-C-methyl-D-erythritol kinase (298 aa).

The active site involves Lys15. 100–110 (PIAAGIGGGSA) is a binding site for ATP. Asp142 is a catalytic residue.

The protein belongs to the GHMP kinase family. IspE subfamily.

The enzyme catalyses 4-CDP-2-C-methyl-D-erythritol + ATP = 4-CDP-2-C-methyl-D-erythritol 2-phosphate + ADP + H(+). It participates in isoprenoid biosynthesis; isopentenyl diphosphate biosynthesis via DXP pathway; isopentenyl diphosphate from 1-deoxy-D-xylulose 5-phosphate: step 3/6. Catalyzes the phosphorylation of the position 2 hydroxy group of 4-diphosphocytidyl-2C-methyl-D-erythritol. This chain is 4-diphosphocytidyl-2-C-methyl-D-erythritol kinase, found in Rhodopseudomonas palustris (strain BisA53).